Consider the following 2293-residue polypeptide: Protein Ycf2 B (2293 aa).

An ATP-binding site is contributed by 1647–1654; sequence GSIGTGRS.

It belongs to the Ycf2 family.

The protein resides in the plastid. It is found in the chloroplast stroma. Functionally, probable ATPase of unknown function. Its presence in a non-photosynthetic plant (Epifagus virginiana) and experiments in tobacco indicate that it has an essential function which is probably not related to photosynthesis. The chain is Protein Ycf2 B from Crucihimalaya wallichii (Rock-cress).